The primary structure comprises 429 residues: Enolase (429 aa).

Residue glutamine 164 coordinates (2R)-2-phosphoglycerate. Catalysis depends on glutamate 206, which acts as the Proton donor. Aspartate 243, glutamate 286, and aspartate 313 together coordinate Mg(2+). Residues lysine 338, arginine 367, serine 368, and lysine 389 each contribute to the (2R)-2-phosphoglycerate site. The Proton acceptor role is filled by lysine 338.

Belongs to the enolase family. It depends on Mg(2+) as a cofactor.

The protein localises to the cytoplasm. It is found in the secreted. It localises to the cell surface. It catalyses the reaction (2R)-2-phosphoglycerate = phosphoenolpyruvate + H2O. It functions in the pathway carbohydrate degradation; glycolysis; pyruvate from D-glyceraldehyde 3-phosphate: step 4/5. Its function is as follows. Catalyzes the reversible conversion of 2-phosphoglycerate (2-PG) into phosphoenolpyruvate (PEP). It is essential for the degradation of carbohydrates via glycolysis. In Thermosipho melanesiensis (strain DSM 12029 / CIP 104789 / BI429), this protein is Enolase.